Reading from the N-terminus, the 340-residue chain is Glucokinase (340 aa).

17–22 (GDIGGT) is a binding site for ATP.

This sequence belongs to the bacterial glucokinase family.

The protein localises to the cytoplasm. The catalysed reaction is D-glucose + ATP = D-glucose 6-phosphate + ADP + H(+). The protein is Glucokinase of Agrobacterium fabrum (strain C58 / ATCC 33970) (Agrobacterium tumefaciens (strain C58)).